Consider the following 359-residue polypeptide: Ornithine cyclodeaminase (359 aa).

2 residues coordinate L-ornithine: Arg53 and Lys77. Residues Thr92, Arg120, 147 to 148, Asp169, Thr209, 232 to 235, Lys239, and Ser300 each bind NAD(+); these read AQ and VGGD. Arg120 contacts L-ornithine. An L-ornithine-binding site is contributed by Asp235. The active-site Proton donor/acceptor is Asp235. Val301 is an L-ornithine binding site.

The protein belongs to the ornithine cyclodeaminase/mu-crystallin family. The cofactor is NAD(+).

It carries out the reaction L-ornithine = L-proline + NH4(+). It functions in the pathway amino-acid biosynthesis; L-proline biosynthesis; L-proline from L-ornithine: step 1/1. Functionally, catalyzes the conversion of L-ornithine into L-proline with release of ammonia. In Brucella abortus biovar 1 (strain 9-941), this protein is Ornithine cyclodeaminase.